Consider the following 269-residue polypeptide: Shikimate dehydrogenase (NADP(+)) (269 aa).

Shikimate-binding positions include 15–17 (SLS) and Thr62. Lys66 acts as the Proton acceptor in catalysis. Residues Asn86 and Asp99 each coordinate shikimate. NADP(+)-binding positions include 123 to 127 (GAGGA), 146 to 151 (NRTTAK), and Leu213. Residue Tyr215 coordinates shikimate. Gly236 lines the NADP(+) pocket.

It belongs to the shikimate dehydrogenase family. As to quaternary structure, homodimer.

It catalyses the reaction shikimate + NADP(+) = 3-dehydroshikimate + NADPH + H(+). It participates in metabolic intermediate biosynthesis; chorismate biosynthesis; chorismate from D-erythrose 4-phosphate and phosphoenolpyruvate: step 4/7. Functionally, involved in the biosynthesis of the chorismate, which leads to the biosynthesis of aromatic amino acids. Catalyzes the reversible NADPH linked reduction of 3-dehydroshikimate (DHSA) to yield shikimate (SA). This chain is Shikimate dehydrogenase (NADP(+)), found in Methanocella arvoryzae (strain DSM 22066 / NBRC 105507 / MRE50).